The primary structure comprises 1370 residues: Putative Polycomb group protein ASXL2 (1370 aa).

Residues 11–86 (RTWAEAAKTV…RMGVYTLKKD (76 aa)) enclose the HTH HARE-type domain. The segment at 92 to 216 (KELSECSEES…DSVPAKPGQM (125 aa)) is disordered. The span at 103 to 120 (DGQSDSHSSDNSSSSDGG) shows a compositional bias: low complexity. Pro residues predominate over residues 141–152 (PPSPPSGCPSPT). Residue Ser-150 is modified to Phosphoserine. The Nuclear localization signal motif lies at 178-182 (QQKKK). A compositionally biased stretch (polar residues) spans 186-198 (CRPSMSISNQHLS). Positions 229–338 (PDSILVNTNL…FENYYGQSSG (110 aa)) constitute a DEUBAD domain. The short motif at 258-262 (LLLLL) is the LXXLL motif element. 2 disordered regions span residues 340–487 (SLED…AGLQ) and 516–535 (QESL…SSWE). Positions 398-412 (QKEENQDEARPDSKS) are enriched in basic and acidic residues. 4 positions are modified to phosphoserine: Ser-477, Ser-524, Ser-553, and Ser-590. Arg-594 carries the asymmetric dimethylarginine modification. Ser-601 carries the post-translational modification Phosphoserine. The segment covering 643-652 (IPGPGPGGGQ) has biased composition (gly residues). Disordered regions lie at residues 643 to 734 (IPGP…LASS), 805 to 891 (PKAG…SSIP), and 1103 to 1175 (GHAD…VSEQ). Composition is skewed to polar residues over residues 719-734 (AQLQ…LASS) and 830-839 (MTSSPVTTAS). Residues 849-870 (SGTATSTGSAPSSSTLPAASSL) show a composition bias toward low complexity. Residues 871–891 (KTPGTSANMNGPISRTSSSIP) are compositionally biased toward polar residues. The segment covering 1119 to 1131 (DESDEDRVGDEQE) has biased composition (acidic residues). A phosphoserine mark is found at Ser-1121 and Ser-1254. A PHD-type; atypical zinc finger spans residues 1332–1369 (PSKCYCRLKAMIMCKGCGAFCHDDCIGPSKLCVSCLVV).

It belongs to the Asx family. As to quaternary structure, core component of the polycomb repressive deubiquitinase (PR-DUB) complex, at least composed of BAP1, one of ASXL1, ASXL2 or (probably) ASXL3, and one of MBD5 or MBD6. Distinct combinations of ASXL and MBD proteins may preferentially bind specific histone modification marks. The PR-DUB core associates with a number of accessory proteins, including FOXK1, FOXK2, KDM1B, HCFC1 and OGT; KDM1B specifically associates with ASXL2 PR-DUB complexes. Interacts (via PHD domain) with MBD5 and MBD6 (via MBD domain); the interaction is probably direct and mediates association of MBD proteins with the PR-DUB core. Interacts with PPARA and PPARG.

The protein resides in the nucleus. In terms of biological role, putative Polycomb group (PcG) protein. PcG proteins act by forming multiprotein complexes, which are required to maintain the transcriptionally repressive state of homeotic genes throughout development. PcG proteins are not required to initiate repression, but to maintain it during later stages of development. They probably act via methylation of histones, rendering chromatin heritably changed in its expressibility. Involved in transcriptional regulation mediated by ligand-bound nuclear hormone receptors, such as peroxisome proliferator-activated receptor gamma (PPARG). Acts as a coactivator for PPARG and enhances its adipocyte differentiation-inducing activity; the function seems to involve differential recruitment of acetylated and methylated histone H3. Non-catalytic component of the PR-DUB complex, a complex that specifically mediates deubiquitination of histone H2A monoubiquitinated at 'Lys-119' (H2AK119ub1). The PR-DUB complex is an epigenetic regulator of gene expression and acts as a transcriptional coactivator, affecting genes involved in development, cell communication, signaling, cell proliferation and cell viability. ASXL1, ASXL2 and ASXL3 function redundantly in the PR-DUB complex. The ASXL proteins are essential for chromatin recruitment and transcriptional activation of associated genes. ASXL1 and ASXL2 are important for BAP1 protein stability. The polypeptide is Putative Polycomb group protein ASXL2 (Asxl2) (Mus musculus (Mouse)).